The following is a 161-amino-acid chain: M-phase phosphoprotein 6 (161 aa).

Residues Lys-37 and Lys-86 each participate in a glycyl lysine isopeptide (Lys-Gly) (interchain with G-Cter in SUMO2) cross-link. Ser-111 is modified (phosphoserine). A Nuclear localization signal motif is present at residues 117–134 (RRYETLVGTIGKKFVKKR). Glycyl lysine isopeptide (Lys-Gly) (interchain with G-Cter in SUMO2) cross-links involve residues Lys-128, Lys-151, and Lys-154.

It belongs to the MPP6 family. As to quaternary structure, associates with the RNA exosome complex, mediated by EXOSC3. Interacts with ARHGAP18. Interacts with exosome cofactors EXOSC10 and MTREX. In terms of processing, phosphorylated in M (mitotic) phase.

Its subcellular location is the nucleus. The protein localises to the nucleolus. It localises to the cytoplasm. In terms of biological role, RNA-binding protein that associates with the RNA exosome complex. Involved in the 3'-processing of the 7S pre-RNA to the mature 5.8S rRNA and plays a role in recruiting the RNA exosome complex to pre-rRNA; this function may include C1D. The chain is M-phase phosphoprotein 6 from Mus musculus (Mouse).